The sequence spans 472 residues: Argininosuccinate lyase (472 aa).

It belongs to the lyase 1 family. Argininosuccinate lyase subfamily.

It localises to the cytoplasm. The catalysed reaction is 2-(N(omega)-L-arginino)succinate = fumarate + L-arginine. The protein operates within amino-acid biosynthesis; L-arginine biosynthesis; L-arginine from L-ornithine and carbamoyl phosphate: step 3/3. The chain is Argininosuccinate lyase from Maricaulis maris (strain MCS10) (Caulobacter maris).